A 304-amino-acid polypeptide reads, in one-letter code: Tyrosine recombinase XerC (304 aa).

The Core-binding (CB) domain occupies 2 to 88 (ANVKNFLTLF…ALRSFYKFLL (87 aa)). One can recognise a Tyr recombinase domain in the interval 109 to 294 (RIPKFLYEKE…SKDMLRKTYM (186 aa)). Residues arginine 149, lysine 173, histidine 246, arginine 249, and histidine 272 contribute to the active site. Tyrosine 281 functions as the O-(3'-phospho-DNA)-tyrosine intermediate in the catalytic mechanism.

This sequence belongs to the 'phage' integrase family. XerC subfamily. Forms a cyclic heterotetrameric complex composed of two molecules of XerC and two molecules of XerD.

It localises to the cytoplasm. Its function is as follows. Site-specific tyrosine recombinase, which acts by catalyzing the cutting and rejoining of the recombining DNA molecules. The XerC-XerD complex is essential to convert dimers of the bacterial chromosome into monomers to permit their segregation at cell division. It also contributes to the segregational stability of plasmids. This Bacillus licheniformis (strain ATCC 14580 / DSM 13 / JCM 2505 / CCUG 7422 / NBRC 12200 / NCIMB 9375 / NCTC 10341 / NRRL NRS-1264 / Gibson 46) protein is Tyrosine recombinase XerC.